A 188-amino-acid chain; its full sequence is Elongation factor P (188 aa).

An N6-(3,6-diaminohexanoyl)-5-hydroxylysine modification is found at lysine 34.

This sequence belongs to the elongation factor P family. Post-translationally, may be beta-lysylated on the epsilon-amino group of Lys-34 by the combined action of EpmA and EpmB, and then hydroxylated on the C5 position of the same residue by EpmC (if this protein is present). Lysylation is critical for the stimulatory effect of EF-P on peptide-bond formation. The lysylation moiety may extend toward the peptidyltransferase center and stabilize the terminal 3-CCA end of the tRNA. Hydroxylation of the C5 position on Lys-34 may allow additional potential stabilizing hydrogen-bond interactions with the P-tRNA.

Its subcellular location is the cytoplasm. Its pathway is protein biosynthesis; polypeptide chain elongation. Its function is as follows. Involved in peptide bond synthesis. Alleviates ribosome stalling that occurs when 3 or more consecutive Pro residues or the sequence PPG is present in a protein, possibly by augmenting the peptidyl transferase activity of the ribosome. Modification of Lys-34 is required for alleviation. The protein is Elongation factor P of Haemophilus influenzae (strain PittGG).